The chain runs to 352 residues: 4-hydroxy-2-oxovalerate aldolase (352 aa).

The 253-residue stretch at 13 to 265 (VRLTDTSLRD…KTGIDFFDIA (253 aa)) folds into the Pyruvate carboxyltransferase domain. Substrate is bound at residue 21-22 (RD). Asp-22 provides a ligand contact to Mn(2+). His-25 serves as the catalytic Proton acceptor. 2 residues coordinate substrate: Ser-175 and His-204. Mn(2+) is bound by residues His-204 and His-206. A substrate-binding site is contributed by Tyr-295.

It belongs to the 4-hydroxy-2-oxovalerate aldolase family.

It carries out the reaction (S)-4-hydroxy-2-oxopentanoate = acetaldehyde + pyruvate. This chain is 4-hydroxy-2-oxovalerate aldolase, found in Mycolicibacterium paratuberculosis (strain ATCC BAA-968 / K-10) (Mycobacterium paratuberculosis).